We begin with the raw amino-acid sequence, 227 residues long: N-acetyltransferase 8B (227 aa).

Residues M1–T42 lie on the Cytoplasmic side of the membrane. The helical; Signal-anchor for type II membrane protein transmembrane segment at L43 to A63 threads the bilayer. The region spanning I61 to H214 is the N-acetyltransferase domain. Over L64–L227 the chain is Lumenal. The residue at position 99 (K99) is an N6-acetyllysine.

Belongs to the NAT8 family. Post-translationally, acetylation on Lys-99 modulates enzymatic activity.

The protein resides in the endoplasmic reticulum-Golgi intermediate compartment membrane. Its subcellular location is the endoplasmic reticulum membrane. The catalysed reaction is L-lysyl-[protein] + acetyl-CoA = N(6)-acetyl-L-lysyl-[protein] + CoA + H(+). Its activity is regulated as follows. Allosterically regulated by acetylation at residue Lys-99. In terms of biological role, endoplasmic reticulum (ER)-membrane-bound lysine N-acetyltransferase catalyzing the N6-acetylation of lysine residues in the lumen of the ER in various proteins, including PROM1 and BACE1, using acetyl-CoA as acetyl donor. Thereby, may regulate apoptosis through the acetylation and the regulation of the expression of PROM1. Acetylates and stabilizes BACE1 immature protein, leading to increased steady-state levels in neurons. By acting on BACE1 expression, may regulate amyloid beta-peptide formation. N(6)-lysine acetylation in ER maintains protein homeostasis and regulates reticulophagy. The sequence is that of N-acetyltransferase 8B from Homo sapiens (Human).